Reading from the N-terminus, the 160-residue chain is Protein-export protein SecB (160 aa).

This sequence belongs to the SecB family. In terms of assembly, homotetramer, a dimer of dimers. One homotetramer interacts with 1 SecA dimer.

Its subcellular location is the cytoplasm. One of the proteins required for the normal export of preproteins out of the cell cytoplasm. It is a molecular chaperone that binds to a subset of precursor proteins, maintaining them in a translocation-competent state. It also specifically binds to its receptor SecA. The protein is Protein-export protein SecB of Orientia tsutsugamushi (strain Boryong) (Rickettsia tsutsugamushi).